The chain runs to 502 residues: Probable glycine dehydrogenase (decarboxylating) subunit 2 (502 aa).

Residue Lys-273 is modified to N6-(pyridoxal phosphate)lysine.

This sequence belongs to the GcvP family. C-terminal subunit subfamily. In terms of assembly, the glycine cleavage system is composed of four proteins: P, T, L and H. In this organism, the P 'protein' is a heterodimer of two subunits. It depends on pyridoxal 5'-phosphate as a cofactor.

The catalysed reaction is N(6)-[(R)-lipoyl]-L-lysyl-[glycine-cleavage complex H protein] + glycine + H(+) = N(6)-[(R)-S(8)-aminomethyldihydrolipoyl]-L-lysyl-[glycine-cleavage complex H protein] + CO2. In terms of biological role, the glycine cleavage system catalyzes the degradation of glycine. The P protein binds the alpha-amino group of glycine through its pyridoxal phosphate cofactor; CO(2) is released and the remaining methylamine moiety is then transferred to the lipoamide cofactor of the H protein. In Pyrococcus furiosus (strain ATCC 43587 / DSM 3638 / JCM 8422 / Vc1), this protein is Probable glycine dehydrogenase (decarboxylating) subunit 2.